Consider the following 400-residue polypeptide: Argininosuccinate synthase (400 aa).

Residues 10 to 18 and alanine 38 each bind ATP; that span reads AYSGGVDTS. L-citrulline is bound at residue tyrosine 89. An ATP-binding site is contributed by glycine 119. Residues threonine 121, asparagine 125, and aspartate 126 each contribute to the L-aspartate site. Asparagine 125 is a binding site for L-citrulline. L-citrulline is bound by residues arginine 129, serine 177, serine 186, glutamate 262, and tyrosine 274.

Belongs to the argininosuccinate synthase family. Type 1 subfamily. In terms of assembly, homotetramer.

Its subcellular location is the cytoplasm. It carries out the reaction L-citrulline + L-aspartate + ATP = 2-(N(omega)-L-arginino)succinate + AMP + diphosphate + H(+). The protein operates within amino-acid biosynthesis; L-arginine biosynthesis; L-arginine from L-ornithine and carbamoyl phosphate: step 2/3. The polypeptide is Argininosuccinate synthase (Prochlorococcus marinus (strain NATL1A)).